Here is a 142-residue protein sequence, read N- to C-terminus: Large ribosomal subunit protein uL13 (142 aa).

Belongs to the universal ribosomal protein uL13 family. Part of the 50S ribosomal subunit.

In terms of biological role, this protein is one of the early assembly proteins of the 50S ribosomal subunit, although it is not seen to bind rRNA by itself. It is important during the early stages of 50S assembly. The chain is Large ribosomal subunit protein uL13 from Serratia proteamaculans (strain 568).